Here is a 236-residue protein sequence, read N- to C-terminus: Apoptosis regulator Bcl-2 (236 aa).

The BH4 signature appears at 10-30 (DNREIVMKYIHYKLSQRGYEW). Thr-69 is subject to Phosphothreonine; by MAPK8. Phosphoserine; by MAPK8 and PKC is present on Ser-70. Position 84 is a phosphoserine; by MAPK8 (Ser-84). The BH3 motif lies at 90–104 (VHLTLRRAGDDFSRR). A BH1 motif is present at residues 133–152 (ELFRDGVNWGRIVAFFEFGG). The BH2 signature appears at 184 to 199 (TWIQDNGGWDAFVELY). Residues 209 to 230 (FSWLSLKALLSLALVGACITLG) traverse the membrane as a helical segment.

Belongs to the Bcl-2 family. In terms of assembly, forms homodimers, and heterodimers with BAX, BAD, BAK and Bcl-X(L). Heterodimerization with BAX requires intact BH1 and BH2 motifs, and is necessary for anti-apoptotic activity. Component of the complex, at least composed of LRPPRC, BECN1 and BCL2; the interactions prevent BECN1 from forming an autophagy-inducing complex with PIK3C3. Interacts with EI24. Also interacts with APAF1, BBC3, BCL2L1, BNIPL, MRPL41 and TP53BP2. Binding to FKBP8 seems to target BCL2 to the mitochondria and probably interferes with the binding of BCL2 to its targets. Interacts with BAG1 in an ATP-dependent manner. Interacts with RAF1 (the 'Ser-338' and 'Ser-339' phosphorylated form). Interacts (via the BH4 domain) with EGLN3; the interaction prevents the formation of the BAX-BCL2 complex and inhibits the anti-apoptotic activity of BCL2. Interacts with G0S2; this interaction also prevents the formation of the anti-apoptotic BAX-BCL2 complex. Interacts with RTL10/BOP. Interacts with the SCF(FBXO10) complex. Interacts (via the loop between motifs BH4 and BH3) with NLRP1 (via LRR repeats), but not with NLRP2, NLRP3, NLRP4, PYCARD, nor MEFV. Interacts with GIMAP3/IAN4, GIMAP4/IAN1 and GIMAP5/IAN5. Interacts with BCAP31. Interacts with IRF3; the interaction is inhibited by Sendai virus infection. Interacts with BECN1; thereby inhibiting autophagy in non-starvation conditions. Interacts with AMBRA1; thereby inhibiting autophagy. Post-translationally, phosphorylation/dephosphorylation on Ser-70 regulates anti-apoptotic activity. Growth factor-stimulated phosphorylation on Ser-70 by PKC is required for the anti-apoptosis activity and occurs during the G2/M phase of the cell cycle. In the absence of growth factors, BCL2 appears to be phosphorylated by other protein kinases such as ERKs and stress-activated kinases. Phosphorylated by MAPK8/JNK1 at Thr-69, Ser-70 and Ser-84, which stimulates starvation-induced autophagy. Dephosphorylated by protein phosphatase 2A (PP2A). Proteolytically cleaved by caspases during apoptosis. The cleaved protein, lacking the BH4 motif, has pro-apoptotic activity, causes the release of cytochrome c into the cytosol promoting further caspase activity. In terms of processing, monoubiquitinated by PRKN, leading to an increase in its stability. Ubiquitinated by SCF(FBXO10), leading to its degradation by the proteasome.

Its subcellular location is the mitochondrion outer membrane. It is found in the nucleus membrane. The protein resides in the endoplasmic reticulum membrane. It localises to the cytoplasm. Suppresses apoptosis in a variety of cell systems including factor-dependent lymphohematopoietic and neural cells. Regulates cell death by controlling the mitochondrial membrane permeability. Appears to function in a feedback loop system with caspases. Inhibits caspase activity either by preventing the release of cytochrome c from the mitochondria and/or by binding to the apoptosis-activating factor (APAF-1). Also acts as an inhibitor of autophagy: interacts with BECN1 and AMBRA1 during non-starvation conditions and inhibits their autophagy function. May attenuate inflammation by impairing NLRP1-inflammasome activation, hence CASP1 activation and IL1B release. The polypeptide is Apoptosis regulator Bcl-2 (BCL2) (Canis lupus familiaris (Dog)).